The chain runs to 330 residues: Trans-1,2-dihydrobenzene-1,2-diol dehydrogenase (330 aa).

This sequence belongs to the Gfo/Idh/MocA family. As to quaternary structure, homodimer.

It catalyses the reaction (1R,2R)-1,2-dihydrobenzene-1,2-diol + NADP(+) = catechol + NADPH + H(+). It carries out the reaction D-xylose + NADP(+) = D-xylono-1,5-lactone + NADPH + H(+). This chain is Trans-1,2-dihydrobenzene-1,2-diol dehydrogenase (dhdh), found in Xenopus laevis (African clawed frog).